The following is an 80-amino-acid chain: Raniseptin-7 (80 aa).

A signal peptide spans 1-22; sequence MAFLKKSLFLVLFLGIVSLSIC. Residues 23–49 constitute a propeptide that is removed on maturation; it reads EEEKREGEEEEKQEEENEELSEEELRE. Residues 27-46 are disordered; the sequence is REGEEEEKQEEENEELSEEE. Positions 30–44 are enriched in acidic residues; sequence EEEEKQEEENEELSE.

The protein belongs to the frog skin active peptide (FSAP) family. Dermaseptin subfamily. Expressed by the skin glands.

It is found in the secreted. Functionally, has antibacterial activity. The polypeptide is Raniseptin-7 (Boana raniceps (Chaco tree frog)).